A 201-amino-acid chain; its full sequence is Cerebellin-4 (201 aa).

Residues 1 to 27 (MGSGRRALSAVPAVLLVLTLPGLPVWA) form the signal peptide. 2 N-linked (GlcNAc...) asparagine glycosylation sites follow: Asn-29 and Asn-88. A C1q domain is found at 66 to 201 (AANSKVAFSA…TFSGFLVFPL (136 aa)).

Homohexamer; disulfide-linked homotrimers. The trimers are assembled via the globular C1q domains. The trimers associate via N-terminal cysteine residues to form disulfide-linked hexamers. May form oligomers with CBLN1, CBLN2 and CBLN3 prior to secretion. Strongly interacts with DCC in a NTN1-displaceable fashion. Weakly binds to NRXN1 and NRXN2 long and short isoforms produced by alternative promoter usage. Interaction with NRXN3 short isoform is hardly detectable; no interaction at all with NRXN3 long isoform. Sialoglycoprotein.

The protein resides in the secreted. The protein localises to the synapse. Acts as a synaptic organizer in specific subsets of neurons in the brain. Essential for the formation and maintenance of inhibitory GABAergic synapses. Promotes the development of dendrite-targeting inhibitory GABAergic synapses made by somatostatin-positive interneurons. May contribute to the function of ventral medial habenula region of the brain implicated in the regulation of anxiety-related behaviors. May play a role in CBLN3 export from the endoplasmic reticulum and secretion. This Homo sapiens (Human) protein is Cerebellin-4 (CBLN4).